Consider the following 416-residue polypeptide: D-amino acid dehydrogenase 2 (416 aa).

Residue 5 to 19 (VCIIGAGVVGLATAY) participates in FAD binding.

The protein belongs to the DadA oxidoreductase family. FAD serves as cofactor.

It carries out the reaction a D-alpha-amino acid + A + H2O = a 2-oxocarboxylate + AH2 + NH4(+). In terms of biological role, oxidative deamination of D-amino acids. The chain is D-amino acid dehydrogenase 2 (dadA2) from Pseudomonas aeruginosa (strain ATCC 15692 / DSM 22644 / CIP 104116 / JCM 14847 / LMG 12228 / 1C / PRS 101 / PAO1).